The primary structure comprises 640 residues: MKNKNSEQNTHSTIGEQDIHYFHEGKHIYAYEFMGAHKACEEGIEGIRFTTWAPNAKSICVIGDFNYWQVEDKNYMEPITDAGLWSVFIPNAKNGDKYKFVVTNKDTNHYVYKSDPYAFFSELRPNTASIITTETQYTWSDDKWLEKRAKTNYYDNPMNVYELHLASWKTKNGKFLTYDELSETLPQYIKEMGYTHVEFMPLHEHPLDASWGYQPTGFYSVNSRHGDIIGLKRLVDKLHNNDIGVILDWVPGHFCKDQHGLIYFDGSPCYEYQEPTKAINKGWGTHNFDLGRNEVKCFLISNAMYWINEFHIDGLRVDAVSNILYLNYDREDGQWIPNIYGGHENLEGIAFLKELNGVLKHTCKGVITIAEESSSWPDISTPVEKGGLGFDFKWNMGWMNDTLRYISLDPVYRKYHHNLITFSMVYHYSEKFILSISHDEVVHGKKSLINKMWGDLWNKYAGLRLYMSYMIGHPGKKLIFMGSEFVQFVEWREYEQLQWQVVDQYESHKQTLHFFKKLNDFYHNETALWQCDYNHHGFRWIDADNSQQSILSFIRSSKDNKQKLIFICNFTPVTYYDYHLGVPDAGSYKEVFNSDNLEFGGSGQVMATEIFSSLQSSHGFEQRITIKIPPMATLVLKLIK.

Asp318 (nucleophile) is an active-site residue. Glu371 serves as the catalytic Proton donor.

This sequence belongs to the glycosyl hydrolase 13 family. GlgB subfamily. As to quaternary structure, monomer.

The enzyme catalyses Transfers a segment of a (1-&gt;4)-alpha-D-glucan chain to a primary hydroxy group in a similar glucan chain.. Its pathway is glycan biosynthesis; glycogen biosynthesis. Its function is as follows. Catalyzes the formation of the alpha-1,6-glucosidic linkages in glycogen by scission of a 1,4-alpha-linked oligosaccharide from growing alpha-1,4-glucan chains and the subsequent attachment of the oligosaccharide to the alpha-1,6 position. The chain is 1,4-alpha-glucan branching enzyme GlgB from Francisella tularensis subsp. tularensis (strain FSC 198).